The primary structure comprises 274 residues: 5-deoxy-glucuronate isomerase (274 aa).

This sequence belongs to the isomerase IolB family.

The enzyme catalyses 5-deoxy-D-glucuronate = 5-dehydro-2-deoxy-D-gluconate. It participates in polyol metabolism; myo-inositol degradation into acetyl-CoA; acetyl-CoA from myo-inositol: step 4/7. Its function is as follows. Involved in the isomerization of 5-deoxy-glucuronate (5DG) to 5-dehydro-2-deoxy-D-gluconate (DKG or 2-deoxy-5-keto-D-gluconate). The chain is 5-deoxy-glucuronate isomerase from Geobacillus thermodenitrificans (strain NG80-2).